Reading from the N-terminus, the 472-residue chain is 2-methylcitrate synthase, mitochondrial (472 aa).

A mitochondrion-targeting transit peptide spans Met1–Tyr29. Arg75 and Lys193 together coordinate CoA. Position 271 (His271) interacts with oxaloacetate. A CoA-binding site is contributed by Leu306. His307 is an active-site residue. Residues Val348, Gly350, and Tyr351 each coordinate CoA. His353 and Arg362 together coordinate oxaloacetate. His353 is a catalytic residue. The CoA site is built by Thr402, Lys403, and Asn408. Asp410 is an active-site residue. Residues Arg436 and Arg456 each coordinate oxaloacetate.

The protein belongs to the citrate synthase family. As to quaternary structure, homodimer.

The protein resides in the mitochondrion matrix. It carries out the reaction propanoyl-CoA + oxaloacetate + H2O = (2S,3S)-2-methylcitrate + CoA + H(+). The catalysed reaction is oxaloacetate + acetyl-CoA + H2O = citrate + CoA + H(+). Its pathway is organic acid metabolism; propanoate degradation. In terms of biological role, component of the methylcitrate cycle that catalyzes the synthesis of (2S,3S)-2-methylcitrate from propionyl-CoA and oxaloacetate. Plays an important role in detoxification of propionyl-CoA, an inhibitor of both primary and secondary metabolism. Also has citrate synthase activity using as substrates acetyl-CoA and oxaloacetate. This is 2-methylcitrate synthase, mitochondrial from Gibberella moniliformis (Maize ear and stalk rot fungus).